Consider the following 732-residue polypeptide: Translation initiation factor eIF2B subunit epsilon (732 aa).

Positions 559–726 (GEEEEDFGVE…QEADEEDSDE (168 aa)) constitute a W2 domain.

Belongs to the eIF-2B gamma/epsilon subunits family. Component of the translation initiation factor 2B (eIF2B) complex which is a heterodecamer of two sets of five different subunits: alpha, beta, gamma, delta and epsilon. Subunits alpha, beta and delta comprise a regulatory subcomplex and subunits epsilon and gamma comprise a catalytic subcomplex. Within the complex, the hexameric regulatory complex resides at the center, with the two heterodimeric catalytic subcomplexes bound on opposite sides.

The protein resides in the cytoplasm. The protein localises to the cytosol. Its function is as follows. Acts as a component of the translation initiation factor 2B (eIF2B) complex, which catalyzes the exchange of GDP for GTP on the eukaryotic initiation factor 2 (eIF2) complex gamma subunit. Its guanine nucleotide exchange factor activity is repressed when bound to eIF2 complex phosphorylated on the alpha subunit, thereby limiting the amount of methionyl-initiator methionine tRNA available to the ribosome and consequently global translation is repressed. The sequence is that of Translation initiation factor eIF2B subunit epsilon (GCD6) from Candida albicans (strain SC5314 / ATCC MYA-2876) (Yeast).